The primary structure comprises 205 residues: Imidazole glycerol phosphate synthase subunit HisH (205 aa).

The Glutamine amidotransferase type-1 domain occupies 3–205 (KIGLIDYGMG…LLRRWIKSIQ (203 aa)). Cysteine 81 serves as the catalytic Nucleophile. Active-site residues include histidine 185 and glutamate 187.

As to quaternary structure, heterodimer of HisH and HisF.

It is found in the cytoplasm. The enzyme catalyses 5-[(5-phospho-1-deoxy-D-ribulos-1-ylimino)methylamino]-1-(5-phospho-beta-D-ribosyl)imidazole-4-carboxamide + L-glutamine = D-erythro-1-(imidazol-4-yl)glycerol 3-phosphate + 5-amino-1-(5-phospho-beta-D-ribosyl)imidazole-4-carboxamide + L-glutamate + H(+). It catalyses the reaction L-glutamine + H2O = L-glutamate + NH4(+). Its pathway is amino-acid biosynthesis; L-histidine biosynthesis; L-histidine from 5-phospho-alpha-D-ribose 1-diphosphate: step 5/9. IGPS catalyzes the conversion of PRFAR and glutamine to IGP, AICAR and glutamate. The HisH subunit catalyzes the hydrolysis of glutamine to glutamate and ammonia as part of the synthesis of IGP and AICAR. The resulting ammonia molecule is channeled to the active site of HisF. The sequence is that of Imidazole glycerol phosphate synthase subunit HisH from Prochlorococcus marinus subsp. pastoris (strain CCMP1986 / NIES-2087 / MED4).